We begin with the raw amino-acid sequence, 779 residues long: FAD-dependent monooxygenase BOA8 (779 aa).

The FAD site is built by Glu-85, Arg-128, Asp-331, and Ala-344. 7 helical membrane passes run Ala-471–Glu-491, Val-504–Ile-524, Ala-542–Phe-562, Ile-587–Ile-607, Asn-618–Val-638, Ile-665–Phe-685, and Leu-742–Val-762.

This sequence belongs to the paxM FAD-dependent monooxygenase family. FAD serves as cofactor.

Its subcellular location is the membrane. The protein operates within polyketide biosynthesis. Functionally, FAD-dependent monooxygenase; part of the gene cluster B that mediates the biosynthesis of botcinic acid and its botcinin derivatives, acetate-derived polyketides that contribute to virulence when combined with the sesquiterpene botrydial. Botcinic acid and its derivatives have been shown to induce chlorosis and necrosis during host plant infection, but also have antifungal activities. Two polyketide synthases, BOA6 and BOA9, are involved in the biosynthesis of botcinins. BOA6 mediates the formation of the per-methylated tetraketide core by condensation of four units of malonyl-CoA with one unit of acetyl-CoA, which would be methylated in activated methylene groups to yield a bicyclic acid intermediate that could then either be converted to botrylactone derivatives or lose the starter acetate unit through a retro-Claisen type C-C bond cleavage to yield botcinin derivatives. The second polyketide synthase, BOA9, is probably required for the biosynthesis of the tetraketide side chain of botcinins. The methyltransferase (MT) domain within BOA6 is probably responsible for the incorporation of four methyl groups. The trans-enoyl reductase BOA5 might take over the enoyl reductase function of BOA6 that misses an ER domain. The monooxygenases BOA2, BOA3 and BOA4 might be involved in further hydroxylations at C4, C5 and C8, whereas BOA7, close to BOA9, could potentially be involved in the hydroxylation at C4 in the side chain of botcinins. In Botryotinia fuckeliana (strain B05.10) (Noble rot fungus), this protein is FAD-dependent monooxygenase BOA8.